The following is a 443-amino-acid chain: UDP-N-acetylmuramate--L-alanine ligase (443 aa).

111–117 (GAHGKTS) provides a ligand contact to ATP.

The protein belongs to the MurCDEF family.

The protein resides in the cytoplasm. It catalyses the reaction UDP-N-acetyl-alpha-D-muramate + L-alanine + ATP = UDP-N-acetyl-alpha-D-muramoyl-L-alanine + ADP + phosphate + H(+). It functions in the pathway cell wall biogenesis; peptidoglycan biosynthesis. Cell wall formation. This is UDP-N-acetylmuramate--L-alanine ligase from Ligilactobacillus salivarius (strain UCC118) (Lactobacillus salivarius).